The chain runs to 462 residues: Solute carrier family 41 member 3 (462 aa).

9 consecutive transmembrane segments (helical) span residues 41 to 61 (CQVA…GLVM), 121 to 141 (LAVV…ASLM), 163 to 183 (VITA…IVIG), 194 to 214 (IATP…LALM), 225 to 245 (WYLT…WIFI), 258 to 278 (YGWF…LILS), 351 to 371 (VLLF…CLVE), 380 to 400 (IFVL…LYLA), and 424 to 444 (GLGD…DWLL).

Belongs to the SLC41A transporter family.

It localises to the mitochondrion inner membrane. The enzyme catalyses Mg(2+)(in) + 2 Na(+)(out) = Mg(2+)(out) + 2 Na(+)(in). Its function is as follows. Na(+)/Mg(2+) ion exchanger that acts as a predominant Mg(2+) efflux system at the mitochondrial inner membrane. The chain is Solute carrier family 41 member 3 (Slc41a3) from Rattus norvegicus (Rat).